We begin with the raw amino-acid sequence, 643 residues long: 3D-(3,5/4)-trihydroxycyclohexane-1,2-dione hydrolase (643 aa).

Glu65 lines the thiamine diphosphate pocket. A thiamine pyrophosphate binding region spans residues 441–521 (SLPGDLQRMW…VNVLLFDNCG (81 aa)). Positions 492 and 519 each coordinate Mg(2+).

This sequence belongs to the TPP enzyme family. Mg(2+) serves as cofactor. Thiamine diphosphate is required as a cofactor.

The enzyme catalyses 3D-3,5/4-trihydroxycyclohexane-1,2-dione + H2O = 5-deoxy-D-glucuronate + H(+). It functions in the pathway polyol metabolism; myo-inositol degradation into acetyl-CoA; acetyl-CoA from myo-inositol: step 3/7. In terms of biological role, involved in the cleavage of the C1-C2 bond of 3D-(3,5/4)-trihydroxycyclohexane-1,2-dione (THcHDO) to yield 5-deoxy-glucuronate (5DG). This Clostridium botulinum (strain Alaska E43 / Type E3) protein is 3D-(3,5/4)-trihydroxycyclohexane-1,2-dione hydrolase.